A 309-amino-acid polypeptide reads, in one-letter code: Taste receptor type 2 member 46 (309 aa).

M1 is a topological domain (extracellular). A helical transmembrane segment spans residues 2 to 22; the sequence is ITFLPIIFSILIVVTFVIGNF. The Cytoplasmic portion of the chain corresponds to 23–46; the sequence is ANGFIALANSIEWFKRQKISFADQ. The chain crosses the membrane as a helical span at residues 47 to 67; it reads ILTALAVSRVGLLWVLLLNWY. The Extracellular portion of the chain corresponds to 68-86; sequence ATELNPAFYSIEVRITAYN. Residues 87 to 107 form a helical membrane-spanning segment; sequence VWAVISHFSNWLATSLSIFYL. Residues 108–126 are Cytoplasmic-facing; that stretch reads LKIANFSNLIFLRLKRRVK. Residues 127–147 form a helical membrane-spanning segment; sequence SVVLVILLGPLLFLVCHLFVI. Residues 148-178 lie on the Extracellular side of the membrane; it reads NMNQIIWTKEYEGNMTWKIKLRSAMYLSDTT. Residue N161 is glycosylated (N-linked (GlcNAc...) asparagine). A helical membrane pass occupies residues 179–199; it reads VTILANLVPFTLTLISFLLLI. Residues 200–229 lie on the Cytoplasmic side of the membrane; it reads CSLCKHLKKMQLHGKGSQDPSMKVHIKALQ. The helical transmembrane segment at 230-250 threads the bilayer; that stretch reads TVTSFLLLCAIYFLSVIMSVW. Residues 251–259 lie on the Extracellular side of the membrane; that stretch reads SFESLENKP. The helical transmembrane segment at 260–280 threads the bilayer; that stretch reads VFMFCEAITFSYPSTHPFILI. Over 281-309 the chain is Cytoplasmic; it reads WGNKKLKQTFLSVLWHVRYWVKGEKPSSS.

The protein belongs to the G-protein coupled receptor T2R family.

The protein localises to the membrane. It is found in the cell projection. The protein resides in the cilium membrane. Receptor that may play a role in the perception of bitterness and is gustducin-linked. May play a role in sensing the chemical composition of the gastrointestinal content. The activity of this receptor may stimulate alpha gustducin, mediate PLC-beta-2 activation and lead to the gating of TRPM5. In airway epithelial cells, binding of bitter compounds increases the intracellular calcium ion concentration and stimulates ciliary beat frequency. The chain is Taste receptor type 2 member 46 (TAS2R46) from Gorilla gorilla gorilla (Western lowland gorilla).